The chain runs to 472 residues: 3-isopropylmalate dehydratase large subunit (472 aa).

C351, C412, and C415 together coordinate [4Fe-4S] cluster.

It belongs to the aconitase/IPM isomerase family. LeuC type 1 subfamily. In terms of assembly, heterodimer of LeuC and LeuD. Requires [4Fe-4S] cluster as cofactor.

It catalyses the reaction (2R,3S)-3-isopropylmalate = (2S)-2-isopropylmalate. Its pathway is amino-acid biosynthesis; L-leucine biosynthesis; L-leucine from 3-methyl-2-oxobutanoate: step 2/4. Functionally, catalyzes the isomerization between 2-isopropylmalate and 3-isopropylmalate, via the formation of 2-isopropylmaleate. The protein is 3-isopropylmalate dehydratase large subunit of Marinobacter nauticus (strain ATCC 700491 / DSM 11845 / VT8) (Marinobacter aquaeolei).